The following is a 68-amino-acid chain: Large ribosomal subunit protein bL32 (68 aa).

It belongs to the bacterial ribosomal protein bL32 family.

The polypeptide is Large ribosomal subunit protein bL32 (Orientia tsutsugamushi (strain Boryong) (Rickettsia tsutsugamushi)).